The chain runs to 101 residues: Small ribosomal subunit protein uS14 (101 aa).

Belongs to the universal ribosomal protein uS14 family. Part of the 30S ribosomal subunit. Contacts proteins S3 and S10.

In terms of biological role, binds 16S rRNA, required for the assembly of 30S particles and may also be responsible for determining the conformation of the 16S rRNA at the A site. The polypeptide is Small ribosomal subunit protein uS14 (Corynebacterium efficiens (strain DSM 44549 / YS-314 / AJ 12310 / JCM 11189 / NBRC 100395)).